We begin with the raw amino-acid sequence, 596 residues long: Germinal center kinase 3 (596 aa).

The segment covering 1 to 54 (MSSSNLAGNTNTTTTSSAASAAAAHSAANASTITSEYSTTQTTTGTFNTDTLSS) has biased composition (low complexity). Positions 1 to 80 (MSSSNLAGNT…PPPPPQVSSP (80 aa)) are disordered. A phosphothreonine; by autocatalysis mark is found at Thr13 and Thr32. Pro residues predominate over residues 67-77 (SQPPPPPPPQV). The Protein kinase domain occupies 108-386 (YKLDESIGVG…ASELLKYSFF (279 aa)). ATP is bound by residues 114 to 122 (IGVGATATV) and Lys137. Ser190 is subject to Phosphoserine; by autocatalysis. Asp240 functions as the Proton acceptor in the catalytic mechanism. The residue at position 280 (Thr280) is a Phosphothreonine. Residue Ser405 is modified to Phosphoserine; by autocatalysis. Residue Ser419 is modified to Phosphoserine. The interval 429-496 (NWEFEYDSPQ…EGGGATTPCP (68 aa)) is disordered. Acidic residues predominate over residues 432 to 450 (FEYDSPQESDDDSDLEDEE). Positions 466–479 (GAAGAAGGATGGAA) are enriched in gly residues.

Belongs to the protein kinase superfamily. STE Ser/Thr protein kinase family. STE20 subfamily. In terms of assembly, interacts (via C-terminus) with clh-3; required for the phosphorylation-mediated inhibition of clh-3 function. Interacts (via C-terminus) with wnk-1; the interaction is direct. Post-translationally, phosphorylated at Thr-280 and Ser-419 probably by wnk-1; phosphorylation results in weak activation. Predominantly autophosphorylated at Thr-32 and Ser-190 and weakly autophosphorylated at Thr-13 and Ser-405 in vitro. As to expression, ubiquitously expressed with a higher expression in the excretory cell. Expressed in both male and female germ cells; up-regulated in maturing spermatocytes but absent in mature sperm.

The protein resides in the cytoplasm. The protein localises to the nucleus. It carries out the reaction L-seryl-[protein] + ATP = O-phospho-L-seryl-[protein] + ADP + H(+). The catalysed reaction is L-threonyl-[protein] + ATP = O-phospho-L-threonyl-[protein] + ADP + H(+). In terms of biological role, plays a role in osmotic stress responses by regulating ion homeostasis and by controlling cell volume via the phosphorylation-mediated inhibition of the chloride channel clh-3. In addition, increases gpdh-1 translation upon osmotic stress, likely downstream of wnk-1. Involved in several developmental processes including the tubular formation of the excretory canals, the formation of the intestine and the progression through larval stages. In addition, required for germ line development by controlling meiosis and chromosomal segregation during spermatogenesis. By controlling clh-3 activity, may regulate the development of the excretory canals and fertility. In Caenorhabditis elegans, this protein is Germinal center kinase 3.